The chain runs to 309 residues: Neuropeptide-like 1 (309 aa).

Residues 1 to 28 (MQAVLQSAHSSRRLMLLLSMLLNAAIQP) form the signal peptide. Residues 29–99 (RSIIVSATDD…GEYPDYLEED (71 aa)) constitute a propeptide that is removed on maturation. A disordered region spans residues 126-147 (GQLPTAEPGEDYGDADSGEPSE). Acidic residues predominate over residues 133-144 (PGEDYGDADSGE). Tyrosine 164 is subject to Tyrosine amide. Asparagine 182 carries the asparagine amide modification.

In terms of tissue distribution, MTYamide peptide: Expressed in the larval CNS (at protein level). NAP peptide: Expressed in the larval CNS (at protein level). IPNamide peptide: Expressed in the ventral ganglion of the third larval instar and adult brain (at protein level).

Its subcellular location is the secreted. Functionally, acts as a ligand for the receptor-type guanylate cyclase Gyc76C. Stimulates Gyc76c-dependent cGMP production and modulates the IMD innate immune pathway in response to salt stress by inducing nuclear translocation of NF-kappa-B protein Rel which leads to increased expression of the antimicrobial peptide diptericin. Does not appear to play a role in Gyc76C-mediated wing development. The protein is Neuropeptide-like 1 (Nplp1) of Drosophila melanogaster (Fruit fly).